Consider the following 335-residue polypeptide: DNA-directed RNA polymerase subunit alpha (335 aa).

The tract at residues 1 to 231 (MVREKITVST…DLLIPFLHTK (231 aa)) is alpha N-terminal domain (alpha-NTD). The tract at residues 263–335 (KKMALKSIFI…FVIDLPKNKF (73 aa)) is alpha C-terminal domain (alpha-CTD).

The protein belongs to the RNA polymerase alpha chain family. In plastids the minimal PEP RNA polymerase catalytic core is composed of four subunits: alpha, beta, beta', and beta''. When a (nuclear-encoded) sigma factor is associated with the core the holoenzyme is formed, which can initiate transcription.

Its subcellular location is the plastid. It localises to the chloroplast. It catalyses the reaction RNA(n) + a ribonucleoside 5'-triphosphate = RNA(n+1) + diphosphate. DNA-dependent RNA polymerase catalyzes the transcription of DNA into RNA using the four ribonucleoside triphosphates as substrates. The chain is DNA-directed RNA polymerase subunit alpha from Lactuca sativa (Garden lettuce).